The chain runs to 499 residues: Probable cytosol aminopeptidase (499 aa).

K269 and D274 together coordinate Mn(2+). Residue K281 is part of the active site. 3 residues coordinate Mn(2+): D292, D351, and E353. Residue R355 is part of the active site.

It belongs to the peptidase M17 family. Mn(2+) is required as a cofactor.

The protein resides in the cytoplasm. The enzyme catalyses Release of an N-terminal amino acid, Xaa-|-Yaa-, in which Xaa is preferably Leu, but may be other amino acids including Pro although not Arg or Lys, and Yaa may be Pro. Amino acid amides and methyl esters are also readily hydrolyzed, but rates on arylamides are exceedingly low.. It carries out the reaction Release of an N-terminal amino acid, preferentially leucine, but not glutamic or aspartic acids.. Functionally, presumably involved in the processing and regular turnover of intracellular proteins. Catalyzes the removal of unsubstituted N-terminal amino acids from various peptides. This is Probable cytosol aminopeptidase from Actinobacillus pleuropneumoniae serotype 5b (strain L20).